A 471-amino-acid polypeptide reads, in one-letter code: Alpha-galactosidase (471 aa).

The first 18 residues, 1–18, serve as a signal peptide directing secretion; the sequence is MFNLNFFNYTCHCEWCFW. A disulfide bond links Cys-42 and Cys-74. Residue Asn-43 is glycosylated (N-linked (GlcNAc...) asparagine). Substrate contacts are provided by Asp-72 and Asp-73. Asn-105 carries an N-linked (GlcNAc...) asparagine glycan. Cysteines 121 and 151 form a disulfide. Lys-147 serves as a coordination point for substrate. Asp-149 functions as the Nucleophile in the catalytic mechanism. Asn-175 is a glycosylation site (N-linked (GlcNAc...) asparagine). A substrate-binding site is contributed by Arg-205. Asp-209 acts as the Proton donor in catalysis. Cystine bridges form between Cys-221–Cys-237 and Cys-223–Cys-230. Residue Gln-251 participates in substrate binding. Asn-270, Asn-370, Asn-403, Asn-417, Asn-422, and Asn-454 each carry an N-linked (GlcNAc...) asparagine glycan.

Belongs to the glycosyl hydrolase 27 family. Homotetramer.

The protein localises to the secreted. It catalyses the reaction Hydrolysis of terminal, non-reducing alpha-D-galactose residues in alpha-D-galactosides, including galactose oligosaccharides, galactomannans and galactolipids.. This Saccharomyces paradoxus (Yeast) protein is Alpha-galactosidase (MEL).